The sequence spans 383 residues: Succinyl-diaminopimelate desuccinylase (383 aa).

Residue H74 coordinates Zn(2+). The active site involves D76. Residue D107 participates in Zn(2+) binding. The Proton acceptor role is filled by E141. The Zn(2+) site is built by E142, E170, and H356.

It belongs to the peptidase M20A family. DapE subfamily. Homodimer. Zn(2+) serves as cofactor. The cofactor is Co(2+).

It catalyses the reaction N-succinyl-(2S,6S)-2,6-diaminopimelate + H2O = (2S,6S)-2,6-diaminopimelate + succinate. It participates in amino-acid biosynthesis; L-lysine biosynthesis via DAP pathway; LL-2,6-diaminopimelate from (S)-tetrahydrodipicolinate (succinylase route): step 3/3. In terms of biological role, catalyzes the hydrolysis of N-succinyl-L,L-diaminopimelic acid (SDAP), forming succinate and LL-2,6-diaminopimelate (DAP), an intermediate involved in the bacterial biosynthesis of lysine and meso-diaminopimelic acid, an essential component of bacterial cell walls. This Cupriavidus taiwanensis (strain DSM 17343 / BCRC 17206 / CCUG 44338 / CIP 107171 / LMG 19424 / R1) (Ralstonia taiwanensis (strain LMG 19424)) protein is Succinyl-diaminopimelate desuccinylase.